A 279-amino-acid chain; its full sequence is Tryptophan synthase alpha chain (279 aa).

Residues E50 and D61 each act as proton acceptor in the active site.

The protein belongs to the TrpA family. Tetramer of two alpha and two beta chains.

It catalyses the reaction (1S,2R)-1-C-(indol-3-yl)glycerol 3-phosphate + L-serine = D-glyceraldehyde 3-phosphate + L-tryptophan + H2O. Its pathway is amino-acid biosynthesis; L-tryptophan biosynthesis; L-tryptophan from chorismate: step 5/5. The alpha subunit is responsible for the aldol cleavage of indoleglycerol phosphate to indole and glyceraldehyde 3-phosphate. The polypeptide is Tryptophan synthase alpha chain (Sinorhizobium medicae (strain WSM419) (Ensifer medicae)).